We begin with the raw amino-acid sequence, 621 residues long: F-box/LRR-repeat protein 4 (621 aa).

Arg-28 is subject to Asymmetric dimethylarginine. An F-box domain is found at 277–332 (NGYFDKLPYELIQLILNHLTLPDLCRLAQTCKLLNQHCCDPLQYIHLNLQPYWAKL). 9 LRR repeats span residues 376-397 (ELVRLELSCSHFLNETCLEIIS), 402-421 (NLQDLNLSSCDKLPPQAFSH), 427-448 (GLKRLVLYRTKVEQTALLSILN), 452-474 (DLQHLSLGSCVMIEDYDVTASMI), 480-501 (KLRTLDLWRCKNITESGIAELA), 504-524 (CPLLEELDLGWCPTLQSSTGC), 532-558 (LPNLQKLFLTANRSVCDTDIEELASNC), 559-583 (TRLRQLDILGTRMVSPASLRKLLES), and 584-609 (CKDLSLLDVSFCSQIDNRAVLELSAS).

In terms of assembly, part of a SCF (SKP1-CUL1-F-box) protein ligase complex. Interacts with FAF2 and VCP. Interacts with PPTC7; this interaction promotes destruction of BNIP3 and NIX and mitophagy suppression.

It localises to the cytoplasm. The protein localises to the nucleus. It is found in the mitochondrion outer membrane. In terms of biological role, substrate-recognition component of the mitochondria-localized SCF-FBXL4 ubiquitin E3 ligase complex that plays a role in the restriction of mitophagy by controlling the degradation of BNIP3 and NIX mitophagy receptors. Also rescues mitochondrial injury through reverting hyperactivation of DRP1-mediated mitochondrial fission. The protein is F-box/LRR-repeat protein 4 (FBXL4) of Bos taurus (Bovine).